The following is a 307-amino-acid chain: uncharacterized protein (307 aa).

This is an uncharacterized protein from Acanthamoeba polyphaga mimivirus (APMV).